A 227-amino-acid chain; its full sequence is UPF0173 metal-dependent hydrolase Bsph_4138 (227 aa).

Belongs to the UPF0173 family.

This is UPF0173 metal-dependent hydrolase Bsph_4138 from Lysinibacillus sphaericus (strain C3-41).